The chain runs to 303 residues: 1D-myo-inositol 2-acetamido-2-deoxy-alpha-D-glucopyranoside deacetylase 1 (303 aa).

Zn(2+) contacts are provided by H15, D18, and H157.

It belongs to the MshB deacetylase family. The cofactor is Zn(2+).

The enzyme catalyses 1D-myo-inositol 2-acetamido-2-deoxy-alpha-D-glucopyranoside + H2O = 1D-myo-inositol 2-amino-2-deoxy-alpha-D-glucopyranoside + acetate. Its function is as follows. Catalyzes the deacetylation of 1D-myo-inositol 2-acetamido-2-deoxy-alpha-D-glucopyranoside (GlcNAc-Ins) in the mycothiol biosynthesis pathway. The polypeptide is 1D-myo-inositol 2-acetamido-2-deoxy-alpha-D-glucopyranoside deacetylase 1 (Saccharopolyspora erythraea (strain ATCC 11635 / DSM 40517 / JCM 4748 / NBRC 13426 / NCIMB 8594 / NRRL 2338)).